Here is a 1161-residue protein sequence, read N- to C-terminus: Auxin response factor 19 (1161 aa).

A disordered region spans residues 1–20 (MMKQAQQQPPPPPASSAATT). A DNA-binding region (TF-B3) is located at residues 154–256 (FCKTLTASDT…QLLLGIRRAN (103 aa)). Residues 573–598 (NQMQQQHASSTQGQQPATSQPLLLPQ) are disordered. The 85-residue stretch at 1027 to 1111 (RTFTKVYKRG…KCIRILSPQE (85 aa)) folds into the PB1 domain.

Belongs to the ARF family. Homodimers and heterodimers. In terms of tissue distribution, expressed in roots, culms, leaves and young panicles.

The protein resides in the nucleus. Functionally, auxin response factors (ARFs) are transcriptional factors that bind specifically to the DNA sequence 5'-TGTCTC-3' found in the auxin-responsive promoter elements (AuxREs). This chain is Auxin response factor 19 (ARF19), found in Oryza sativa subsp. japonica (Rice).